The sequence spans 110 residues: UPF0145 protein LMOf2365_0219 (110 aa).

This sequence belongs to the UPF0145 family.

This Listeria monocytogenes serotype 4b (strain F2365) protein is UPF0145 protein LMOf2365_0219.